A 270-amino-acid chain; its full sequence is Calpain small subunit 1 (270 aa).

Position 1 is an N-acetylmethionine (methionine 1). Serine 6 bears the Phosphoserine mark. In terms of domain architecture, EF-hand 1; atypical spans 98 to 132 (EEERQFRKLFVQLAGDDMEVSATELMNILNKVVTR). The Ca(2+) site is built by alanine 111, aspartate 114, glutamate 116, glutamate 121, aspartate 139, aspartate 154, aspartate 156, threonine 158, lysine 160, and glutamate 165. EF-hand domains lie at 141 to 174 (FGIDTCRSMVAVMDSDTTGKLGFEEFKYLWNNIK), 171 to 206 (NNIKKWQGIYKRFDTDRSGTIGSNELPGAFEAAGFH), 207 to 235 (LNQHIYSMIIRRYSDETGNMDFDNFISCL), and 236 to 270 (VRLDAMFRAFRSLDKNGTGQIQVNIQEWLQLTMYS). Lysine 181 carries the N6-acetyllysine modification. Ca(2+)-binding residues include aspartate 184, aspartate 186, serine 188, threonine 190, glutamate 195, and aspartate 227.

In terms of assembly, homodimer or heterodimer of a large (catalytic) and a small (regulatory) subunit. In presence of calcium, the heterodimer dissociates.

The protein localises to the cytoplasm. Its subcellular location is the cell membrane. In terms of biological role, regulatory subunit of the calcium-regulated non-lysosomal thiol-protease which catalyzes limited proteolysis of substrates involved in cytoskeletal remodeling and signal transduction. Essential for embryonic development. The chain is Calpain small subunit 1 (Capns1) from Rattus norvegicus (Rat).